The primary structure comprises 173 residues: Ribulose bisphosphate carboxylase small subunit, chloroplastic 5 (173 aa).

The N-terminal 49 residues, 1-49 (MASIPATVATVAQANMVAPFTGLKSNAAFPVTKKVNDFSTLPSNGGRVQ), are a transit peptide targeting the chloroplast.

The protein belongs to the RuBisCO small chain family. Heterohexadecamer of 8 large and 8 small subunits.

It is found in the plastid. The protein resides in the chloroplast. Functionally, ruBisCO catalyzes two reactions: the carboxylation of D-ribulose 1,5-bisphosphate, the primary event in carbon dioxide fixation, as well as the oxidative fragmentation of the pentose substrate. Both reactions occur simultaneously and in competition at the same active site. Although the small subunit is not catalytic it is essential for maximal activity. The protein is Ribulose bisphosphate carboxylase small subunit, chloroplastic 5 of Flaveria pringlei.